The primary structure comprises 359 residues: Proton-coupled zinc antiporter SLC30A2 (359 aa).

The Cytoplasmic segment spans residues 1–56; it reads MASRSFFGALWKSEASRIPPVNLPSVELAVQSNHYCHAQKDSGSHPNSEKQRARRK. A Mitochondrial localization signal motif is present at residues 34-37; the sequence is HYCH. Cys-36 is a binding site for Zn(2+). A helical membrane pass occupies residues 57-77; sequence LYVASAICLVFMIGEIIGGYL. The Lumenal portion of the chain corresponds to 78–86; that stretch reads AQSLAIMTD. A helical transmembrane segment spans residues 87–107; sequence AAHLLTDFASMLISLFSLWVS. The Zn(2+) site is built by His-89 and Asp-93. The Cytoplasmic portion of the chain corresponds to 108–123; it reads SRPATKTMNFGWQRAE. Residues 124–144 form a helical membrane-spanning segment; it reads ILGALLSVLSIWVVTGVLVYL. Topologically, residues 145-159 are lumenal; the sequence is AVQRLISGDYEIKGD. A helical membrane pass occupies residues 160–180; that stretch reads TMLITSGCAVAVNIIMGLALH. At 181 to 207 the chain is on the cytoplasmic side; it reads QSGHGHSHGHSHEDSSQQQQNPSVRAA. Residues 208 to 228 traverse the membrane as a helical segment; that stretch reads FIHVVGDLLQSVGVLVAAYII. Zn(2+) is bound by residues His-210 and Asp-214. Topologically, residues 229-236 are lumenal; it reads YFKPEYKY. The helical transmembrane segment at 237-257 threads the bilayer; sequence VDPICTFLFSILVLGTTLTIL. Over 258–291 the chain is Cytoplasmic; sequence RDVILVLMEGTPKGVDFTTVKNLLLSVDGVEALH. The Lysosomal targeting motif signature appears at 281 to 282; the sequence is LL. Ser-283 carries the post-translational modification Phosphoserine. Zn(2+) contacts are provided by His-291, His-308, and Glu-342. Residues 292–312 form a helical membrane-spanning segment; sequence SLHIWALTVAQPVLSVHIAIA. The Lumenal portion of the chain corresponds to 313 to 359; the sequence is QNVDAQAVLKVARDRLQGKFNFHTMTIQIESYSEDMKSCQECQGPSE.

This sequence belongs to the cation diffusion facilitator (CDF) transporter (TC 2.A.4) family. SLC30A subfamily. In terms of assembly, homodimer. Interacts (via lysosomal targeting motif) with AP3D1; in AP-3-mediated transport to lysosomes. Interacts with TMEM163. In terms of processing, phosphorylated at Ser-283. Phosphorylation at Ser-283 prevents localization to lysosomes. Dephosphorylation of Ser-283 which triggers localization to lysosomes, accumulation of zinc into lysosomes and lysosomal-mediated cell death is induced by TNF-alpha. In terms of tissue distribution, detected in intestine, kidney, seminal vesicles and testis.

It is found in the cytoplasmic vesicle. It localises to the secretory vesicle membrane. The protein resides in the zymogen granule membrane. The protein localises to the endosome membrane. Its subcellular location is the lysosome membrane. It is found in the mitochondrion inner membrane. The enzyme catalyses Zn(2+)(in) + 2 H(+)(out) = Zn(2+)(out) + 2 H(+)(in). Electroneutral proton-coupled antiporter concentrating zinc ions into a variety of intracellular organelles including endosomes, zymogen granules and mitochondria. Thereby, plays a crucial role in cellular zinc homeostasis to confer upon cells protection against its potential cytotoxicity. Regulates the zinc concentration of milk, through the transport of zinc ions into secretory vesicles of mammary cells. By concentrating zinc ions into lysosomes participates to lysosomal-mediated cell death during early mammary gland involution. This is Proton-coupled zinc antiporter SLC30A2 from Rattus norvegicus (Rat).